The following is a 474-amino-acid chain: ATP synthase subunit beta 2 (474 aa).

156–163 (GGAGVGKT) lines the ATP pocket.

This sequence belongs to the ATPase alpha/beta chains family. In terms of assembly, F-type ATPases have 2 components, CF(1) - the catalytic core - and CF(0) - the membrane proton channel. CF(1) has five subunits: alpha(3), beta(3), gamma(1), delta(1), epsilon(1). CF(0) has three main subunits: a(1), b(2) and c(9-12). The alpha and beta chains form an alternating ring which encloses part of the gamma chain. CF(1) is attached to CF(0) by a central stalk formed by the gamma and epsilon chains, while a peripheral stalk is formed by the delta and b chains.

It is found in the cell inner membrane. It carries out the reaction ATP + H2O + 4 H(+)(in) = ADP + phosphate + 5 H(+)(out). Produces ATP from ADP in the presence of a proton gradient across the membrane. The catalytic sites are hosted primarily by the beta subunits. The polypeptide is ATP synthase subunit beta 2 (Shewanella frigidimarina (strain NCIMB 400)).